Here is a 59-residue protein sequence, read N- to C-terminus: Small ribosomal subunit protein bS21 (59 aa).

A disordered region spans residues 27–59; sequence GLMAEMRKREHYEKPSVRRKKKAQARNKKKRYA. The segment covering 31–42 has biased composition (basic and acidic residues); that stretch reads EMRKREHYEKPS. The segment covering 43-59 has biased composition (basic residues); it reads VRRKKKAQARNKKKRYA.

It belongs to the bacterial ribosomal protein bS21 family.

The polypeptide is Small ribosomal subunit protein bS21 (Carboxydothermus hydrogenoformans (strain ATCC BAA-161 / DSM 6008 / Z-2901)).